Reading from the N-terminus, the 362-residue chain is Ferredoxin--NADP reductase 1 (362 aa).

Asp-47, Gln-55, Tyr-60, Ala-100, Phe-141, Asp-309, and Ser-350 together coordinate FAD.

This sequence belongs to the ferredoxin--NADP reductase type 2 family. Homodimer. The cofactor is FAD.

It carries out the reaction 2 reduced [2Fe-2S]-[ferredoxin] + NADP(+) + H(+) = 2 oxidized [2Fe-2S]-[ferredoxin] + NADPH. This is Ferredoxin--NADP reductase 1 from Cupriavidus pinatubonensis (strain JMP 134 / LMG 1197) (Cupriavidus necator (strain JMP 134)).